We begin with the raw amino-acid sequence, 341 residues long: Phenylalanine--tRNA ligase alpha subunit (341 aa).

Glu256 is a binding site for Mg(2+).

This sequence belongs to the class-II aminoacyl-tRNA synthetase family. Phe-tRNA synthetase alpha subunit type 1 subfamily. In terms of assembly, tetramer of two alpha and two beta subunits. Requires Mg(2+) as cofactor.

It is found in the cytoplasm. The catalysed reaction is tRNA(Phe) + L-phenylalanine + ATP = L-phenylalanyl-tRNA(Phe) + AMP + diphosphate + H(+). In Chlamydia abortus (strain DSM 27085 / S26/3) (Chlamydophila abortus), this protein is Phenylalanine--tRNA ligase alpha subunit.